The following is a 131-amino-acid chain: Torsin-1A-interacting protein 2, isoform IFRG15 (131 aa).

The polypeptide is Torsin-1A-interacting protein 2, isoform IFRG15 (Tor1aip2) (Mus musculus (Mouse)).